A 396-amino-acid chain; its full sequence is Protein Njmu-R1 (396 aa).

Residues 1–78 are disordered; it reads MLPSLQESMD…SGDDFSLSLA (78 aa). A phosphoserine mark is found at Ser8 and Ser18. Positions 9 to 24 are enriched in acidic residues; that stretch reads MDGDEKELESSEEGGS. Residues 58–67 show a composition bias toward polar residues; that stretch reads GSPSGTNAET.

In terms of assembly, component of the complex WDR11 composed of C17orf75, FAM91A1 and WDR11; FAM91A1 and WDR11 are required for proper location of the complex. Interacts with TBC1D23; this interaction may be indirect and recruits TBC1D23 to AP-1-derived vesicles. In terms of tissue distribution, highly expressed in testis and also expressed in fetal testis.

Its subcellular location is the golgi apparatus. The protein resides in the trans-Golgi network. It localises to the cytoplasmic vesicle. Its function is as follows. As component of the WDR11 complex acts together with TBC1D23 to facilitate the golgin-mediated capture of vesicles generated using AP-1. May have a role in spermatogenesis. The sequence is that of Protein Njmu-R1 (C17orf75) from Homo sapiens (Human).